Consider the following 248-residue polypeptide: Probable phosphatase VF_A0065 (248 aa).

Residues His-8, His-10, His-16, His-41, Glu-74, His-102, His-132, Asp-194, and His-196 each contribute to the Zn(2+) site.

The protein belongs to the PHP family. Zn(2+) is required as a cofactor.

The protein is Probable phosphatase VF_A0065 of Aliivibrio fischeri (strain ATCC 700601 / ES114) (Vibrio fischeri).